Consider the following 784-residue polypeptide: Kinesin-like protein 6 (784 aa).

Residues 6 to 389 (SISVAVRVRP…LKYGNRAKNI (384 aa)) enclose the Kinesin motor domain. 134-141 (GATGCGKT) is an ATP binding site. Coiled-coil stretches lie at residues 405–440 (SEYV…EVRK) and 463–483 (RDLQ…EDEI). The tract at residues 677–715 (SEVPTTSSVPPVEIKNKDSKPKVEKSLDKHNMNNDRSFL) is disordered. The span at 690–709 (IKNKDSKPKVEKSLDKHNMN) shows a compositional bias: basic and acidic residues.

Belongs to the TRAFAC class myosin-kinesin ATPase superfamily. Kinesin family. Kinesin II subfamily. As to quaternary structure, heterodimer with klp5.

It is found in the cytoplasm. The protein resides in the cytoskeleton. It localises to the chromosome. The protein localises to the centromere. Its subcellular location is the kinetochore. It is found in the spindle. Its function is as follows. Has a role in establishing metaphase during mitosis. Required for chromosome segregation where it generates tension during kinetochore capturing. This is Kinesin-like protein 6 (klp6) from Schizosaccharomyces pombe (strain 972 / ATCC 24843) (Fission yeast).